The sequence spans 778 residues: uncharacterized protein (778 aa).

Residues 1–92 (MSFVIAVPEA…GARSYVVAEA (92 aa)) enclose the PE domain. Disordered regions lie at residues 125 to 163 (ADGTGAPGGPGGLLLGNGGNGGSGAPGQPGGAGGDAGLI), 372 to 510 (TGLA…GDAF), and 718 to 778 (QGGL…GADG). Composition is skewed to gly residues over residues 402–429 (NQTGGNGGPGPAGGVGEAGGVGGQGGLG), 436–510 (DGTG…GDAF), and 718–763 (QGGL…GSSG).

It belongs to the mycobacterial PE family. PGRS subfamily.

This is an uncharacterized protein from Mycobacterium tuberculosis (strain CDC 1551 / Oshkosh).